A 596-amino-acid polypeptide reads, in one-letter code: RNA-binding protein involved in heterochromatin assembly dri1 (596 aa).

Position 176 is a phosphoserine (Ser176). The RRM domain occupies 236–314 (KIVHVAGLTN…RMLEIIPSST (79 aa)). The RanBP2-type 1 zinc finger occupies 335 to 364 (RPGDWNCPMCGFSNFQRRTSCFRCSFPGPT). Ser429 carries the phosphoserine modification. RanBP2-type zinc fingers lie at residues 437–468 (RAGDWKCGSEGCGYHNFAKNVCCLRCGASRAT) and 552–580 (DQGDWLCECGFTNFRRRSNCLRCNAPHYS).

Interacts with dpb4. Interacts with chp1.

The protein localises to the chromosome. It localises to the nucleus. It is found in the cytoplasm. Its subcellular location is the cytoplasmic granule. Functionally, mediates heterochromatin assembly by promoting RNAi-mediated heterochromatin silencing and histone deacetylation. Binds pericetromeric transcripts and recruits the RNA-induced transcriptional silencing (RITS) complex to heterochromatin. Recruits sir2 to chromatin to promote deacetylation of 'Lys-9' of histone H3. Involved in bipolar spindle assembly during mitosis. Required for proper localization of kinesin-14/Klp2 on the spindle microtubules. In Schizosaccharomyces pombe (strain 972 / ATCC 24843) (Fission yeast), this protein is RNA-binding protein involved in heterochromatin assembly dri1.